Reading from the N-terminus, the 127-residue chain is Lysozyme C (127 aa).

The 127-residue stretch at 1–127 (KDIPRCELVK…KDLSSYVRGC (127 aa)) folds into the C-type lysozyme domain. Disulfide bonds link C6/C127, C30/C115, C64/C80, and C76/C94. Catalysis depends on residues E35 and D52. K82, D85, N87, D90, and D91 together coordinate Ca(2+).

This sequence belongs to the glycosyl hydrolase 22 family. Monomer. Ca(2+) serves as cofactor.

It localises to the secreted. It carries out the reaction Hydrolysis of (1-&gt;4)-beta-linkages between N-acetylmuramic acid and N-acetyl-D-glucosamine residues in a peptidoglycan and between N-acetyl-D-glucosamine residues in chitodextrins.. Functionally, lysozymes have primarily a bacteriolytic function; those in tissues and body fluids are associated with the monocyte-macrophage system and enhance the activity of immunoagents. In Columba livia (Rock dove), this protein is Lysozyme C (LYZ).